A 221-amino-acid polypeptide reads, in one-letter code: Phosphatidylethanolamine-binding protein homolog F40A3.3 (221 aa).

The protein belongs to the phosphatidylethanolamine-binding protein family.

In Caenorhabditis elegans, this protein is Phosphatidylethanolamine-binding protein homolog F40A3.3.